The primary structure comprises 604 residues: FAD-linked oxidoreductase easE (604 aa).

The N-terminal stretch at 1–25 (MQFLLWSTGLVALLSWLIYTQETQS) is a signal peptide. Residues asparagine 47, asparagine 70, asparagine 106, and asparagine 196 are each glycosylated (N-linked (GlcNAc...) asparagine). An FAD-binding PCMH-type domain is found at 125–308 (QGRIPLFTVG…TRATMRVFPD (184 aa)).

The protein belongs to the oxygen-dependent FAD-linked oxidoreductase family. FAD serves as cofactor.

It participates in alkaloid biosynthesis; ergot alkaloid biosynthesis. FAD-linked oxidoreductase; part of the gene cluster that mediates the biosynthesis of fungal ergot alkaloid. DmaW catalyzes the first step of ergot alkaloid biosynthesis by condensing dimethylallyl diphosphate (DMAP) and tryptophan to form 4-dimethylallyl-L-tryptophan. The second step is catalyzed by the methyltransferase easF that methylates 4-dimethylallyl-L-tryptophan in the presence of S-adenosyl-L-methionine, resulting in the formation of 4-dimethylallyl-L-abrine. The catalase easC and the FAD-dependent oxidoreductase easE then transform 4-dimethylallyl-L-abrine to chanoclavine-I which is further oxidized by easD in the presence of NAD(+), resulting in the formation of chanoclavine-I aldehyde. Chanoclavine-I aldehyde is the precursor of ergoamides and ergopeptines in Clavicipitaceae, and clavine-type alcaloids such as fumiclavine in Trichocomaceae. However, the metabolites downstream of chanoclavine-I aldehyde in Arthrodermataceae have not been identified yet. This chain is FAD-linked oxidoreductase easE, found in Trichophyton verrucosum (strain HKI 0517).